Reading from the N-terminus, the 603-residue chain is Probable L-gulonolactone oxidase 6 (603 aa).

Residues 1–35 (MAFTSSPSYGSLNAAFWRTIFVVHCISTLVFTTIS) form the signal peptide. The 183-residue stretch at 64–246 (STCRAANVAY…SQVTLKLQPM (183 aa)) folds into the FAD-binding PCMH-type domain.

This sequence belongs to the oxygen-dependent FAD-linked oxidoreductase family. FAD is required as a cofactor.

The catalysed reaction is L-gulono-1,4-lactone + O2 = L-ascorbate + H2O2 + H(+). Its pathway is cofactor biosynthesis; L-ascorbate biosynthesis. Its function is as follows. May be involved in the biosynthesis of ascorbic acid. This Arabidopsis thaliana (Mouse-ear cress) protein is Probable L-gulonolactone oxidase 6.